The chain runs to 188 residues: Ribosomal RNA small subunit methyltransferase G (188 aa).

Residues G69, F74, 119–120, and R134 contribute to the S-adenosyl-L-methionine site; that span reads VQ.

The protein belongs to the methyltransferase superfamily. RNA methyltransferase RsmG family.

The protein resides in the cytoplasm. It catalyses the reaction guanosine(527) in 16S rRNA + S-adenosyl-L-methionine = N(7)-methylguanosine(527) in 16S rRNA + S-adenosyl-L-homocysteine. Functionally, specifically methylates the N7 position of guanine in position 527 of 16S rRNA. The chain is Ribosomal RNA small subunit methyltransferase G from Campylobacter jejuni subsp. jejuni serotype O:23/36 (strain 81-176).